We begin with the raw amino-acid sequence, 379 residues long: UDP-4-amino-4-deoxy-L-arabinose--oxoglutarate aminotransferase (379 aa).

Position 182 is an N6-(pyridoxal phosphate)lysine (lysine 182).

It belongs to the DegT/DnrJ/EryC1 family. ArnB subfamily. As to quaternary structure, homodimer. Requires pyridoxal 5'-phosphate as cofactor.

The catalysed reaction is UDP-4-amino-4-deoxy-beta-L-arabinose + 2-oxoglutarate = UDP-beta-L-threo-pentopyranos-4-ulose + L-glutamate. Its pathway is nucleotide-sugar biosynthesis; UDP-4-deoxy-4-formamido-beta-L-arabinose biosynthesis; UDP-4-deoxy-4-formamido-beta-L-arabinose from UDP-alpha-D-glucuronate: step 2/3. It participates in bacterial outer membrane biogenesis; lipopolysaccharide biosynthesis. Its function is as follows. Catalyzes the conversion of UDP-4-keto-arabinose (UDP-Ara4O) to UDP-4-amino-4-deoxy-L-arabinose (UDP-L-Ara4N). The modified arabinose is attached to lipid A and is required for resistance to polymyxin and cationic antimicrobial peptides. This is UDP-4-amino-4-deoxy-L-arabinose--oxoglutarate aminotransferase from Klebsiella pneumoniae subsp. pneumoniae (strain ATCC 700721 / MGH 78578).